We begin with the raw amino-acid sequence, 374 residues long: Ferroptosis suppressor protein 1 (374 aa).

Gly-2 is lipidated: N-myristoyl glycine. Residues 13–35 (VVIVGGGFAGIAAATQLKSFGIP) form a helical membrane-spanning segment. 6-hydroxy-FAD-binding positions include 17 to 21 (GGGFA), Arg-53, and Val-81. Lys-167 bears the N6-acetyllysine mark. A 6-hydroxy-FAD-binding site is contributed by Asp-285.

The protein belongs to the FAD-dependent oxidoreductase family. The cofactor is 6-hydroxy-FAD. N-myristoylation at Gly-2 mediates the recruitment to lipid droplets and plasma membrane. Post-translationally, acetylation at Lys-167 prevents AIFM2 ubiquitination and degradation, thereby inhibiting ferroptosis. KAT2B mediates acetylation at Lys-167, while HDAC3 removes it. In terms of processing, ubiquitinated. AIFM2 undergoes 'Lys-29'-ubiquitination and proteasomal degradation, which is inhibited by acetylation at Lys-167.

The protein localises to the lipid droplet. It is found in the cell membrane. It localises to the cytoplasm. The protein resides in the mitochondrion membrane. Its subcellular location is the nucleus. It carries out the reaction ubiquinone-10 + NADH + H(+) = ubiquinol-10 + NAD(+). The catalysed reaction is phylloquinone + NADH + H(+) = phylloquinol + NAD(+). It catalyses the reaction menaquinone-4 + NADH + H(+) = menaquinol-4 + NAD(+). The enzyme catalyses menadione + NADH + H(+) = menadiol + NAD(+). The modification by 4-hydroxy-2-nonenal (HNE) adduction in mitochondria results in loss of the oxidoreductase activity and activation of a novel function in mitochondrial oxidative stress signaling. Its function is as follows. An NAD(P)H-dependent oxidoreductase that acts as a key inhibitor of ferroptosis. At the plasma membrane, catalyzes reduction of coenzyme Q/ubiquinone-10 to ubiquinol-10, a lipophilic radical-trapping antioxidant that prevents lipid oxidative damage and consequently ferroptosis. Acts in parallel to GPX4 to suppress phospholipid peroxidation and ferroptosis. This anti-ferroptotic function is independent of cellular glutathione levels. Also acts as a potent radical-trapping antioxidant by mediating warfarin-resistant vitamin K reduction in the canonical vitamin K cycle: catalyzes NAD(P)H-dependent reduction of vitamin K (phylloquinone, menaquinone-4 and menadione) to hydroquinone forms. Hydroquinones act as potent radical-trapping antioxidants inhibitor of phospholipid peroxidation and ferroptosis. May play a role in mitochondrial stress signaling. Upon oxidative stress, associates with the lipid peroxidation end product 4-hydroxy-2-nonenal (HNE) forming a lipid adduct devoid of oxidoreductase activity, which then translocates from mitochondria into the nucleus triggering DNA damage and cell death. This chain is Ferroptosis suppressor protein 1 (aifm2), found in Xenopus tropicalis (Western clawed frog).